A 319-amino-acid chain; its full sequence is tRNA pseudouridine synthase B (319 aa).

The Nucleophile role is filled by Asp-49.

Belongs to the pseudouridine synthase TruB family. Type 1 subfamily.

It carries out the reaction uridine(55) in tRNA = pseudouridine(55) in tRNA. In terms of biological role, responsible for synthesis of pseudouridine from uracil-55 in the psi GC loop of transfer RNAs. The chain is tRNA pseudouridine synthase B from Bartonella henselae (strain ATCC 49882 / DSM 28221 / CCUG 30454 / Houston 1) (Rochalimaea henselae).